Consider the following 197-residue polypeptide: Peptide deformylase (197 aa).

Positions 106 and 148 each coordinate Fe cation. Glu-149 is a catalytic residue. His-152 is a Fe cation binding site.

It belongs to the polypeptide deformylase family. Fe(2+) serves as cofactor.

It carries out the reaction N-terminal N-formyl-L-methionyl-[peptide] + H2O = N-terminal L-methionyl-[peptide] + formate. Its function is as follows. Removes the formyl group from the N-terminal Met of newly synthesized proteins. Requires at least a dipeptide for an efficient rate of reaction. N-terminal L-methionine is a prerequisite for activity but the enzyme has broad specificity at other positions. In Mycobacterium sp. (strain JLS), this protein is Peptide deformylase.